Reading from the N-terminus, the 443-residue chain is Two-pore potassium channel 2 (443 aa).

The Cytoplasmic segment spans residues 1 to 144 (MANDGNGDNN…KTDQQSDSKT (144 aa)). Residues 67 to 109 (SLPIDALSQNPSTSSSATTSFSDSTDLLLPLTEPNKPVRKSKP) are disordered. Positions 72 to 98 (ALSQNPSTSSSATTSFSDSTDLLLPLT) are enriched in low complexity. A helical membrane pass occupies residues 145–165 (IVNQAVALLVVYLSLGVLIYW). Positions 181-200 (DALYFCIVTMCTIGYGDITP) form an intramembrane region, pore-forming. Residues 208–228 (FSIFFVLVGFGFMDILLSGMV) form a helical membrane-spanning segment. Residues 229 to 274 (TYVLDLQENYMLETARNESLNLNDRDKVRSYIIDVKKGRMRIRLKV) lie on the Cytoplasmic side of the membrane. A helical membrane pass occupies residues 275–295 (GLALGVVVLCLGFGVLIMHFV). Positions 302-321 (DSFYFSVMSVTTVGYGDRAF) form an intramembrane region, pore-forming. A helical membrane pass occupies residues 328–348 (LLAAMWLLVSTLAVARAILFL). The Cytoplasmic segment spans residues 349–443 (AESRVDKRNR…TKDLPTATSI (95 aa)). EF-hand domains lie at 365–400 (LGES…KMDK) and 404–439 (KDIN…DLPT). Ca(2+) contacts are provided by Asp-378, Asp-380, Asn-382, Cys-384, Glu-389, Asp-417, Ser-421, Arg-423, and Asp-428.

The protein belongs to the two pore domain potassium channel (TC 1.A.1.7) family. In terms of assembly, homodimer. As to expression, expressed in roots, stems, leaves and flowers.

The protein localises to the vacuole membrane. Probable voltage-independent potassium-selective tonoplast ion channel. In Arabidopsis thaliana (Mouse-ear cress), this protein is Two-pore potassium channel 2 (TPK2).